The sequence spans 154 residues: U1 small nuclear ribonucleoprotein C (154 aa).

A Matrin-type zinc finger spans residues 4 to 36; the sequence is YYCDYCDTYLTHDSPSVRKTHCTGRKHKDNVKF.

The protein belongs to the U1 small nuclear ribonucleoprotein C family. U1 snRNP is composed of the 7 core Sm proteins B/B', D1, D2, D3, E, F and G that assemble in a heptameric protein ring on the Sm site of the small nuclear RNA to form the core snRNP, and at least 3 U1 snRNP-specific proteins U1-70K, U1-A and U1-C. U1-C interacts with U1 snRNA and the 5' splice-site region of the pre-mRNA.

It localises to the nucleus. In terms of biological role, component of the spliceosomal U1 snRNP, which is essential for recognition of the pre-mRNA 5' splice-site and the subsequent assembly of the spliceosome. U1-C is directly involved in initial 5' splice-site recognition for both constitutive and regulated alternative splicing. The interaction with the 5' splice-site seems to precede base-pairing between the pre-mRNA and the U1 snRNA. Stimulates commitment or early (E) complex formation by stabilizing the base pairing of the 5' end of the U1 snRNA and the 5' splice-site region. The protein is U1 small nuclear ribonucleoprotein C of Aedes aegypti (Yellowfever mosquito).